The following is a 44-amino-acid chain: Photosystem I reaction center subunit IX (44 aa).

A helical transmembrane segment spans residues 7–27 (YLSVAPVLSTLWFASLAGLLI).

It belongs to the PsaJ family.

The protein resides in the plastid. It is found in the chloroplast thylakoid membrane. May help in the organization of the PsaE and PsaF subunits. The protein is Photosystem I reaction center subunit IX of Barbarea verna (Land cress).